A 1070-amino-acid chain; its full sequence is DNA double-strand break repair Rad50 ATPase (1070 aa).

Residues Arg-12, Asn-32–Ser-38, and Gln-142 contribute to the ATP site. Coiled-coil stretches lie at residues Leu-227–Glu-257, Glu-369–Gly-403, and Leu-449–Arg-478. The Zinc-hook domain occupies Leu-508 to Lys-607. Zn(2+) contacts are provided by Cys-555 and Cys-558. Coiled coils occupy residues Thr-570 to Asp-614 and Leu-878 to Leu-908. Residue Leu-969–Glu-974 participates in ATP binding.

It belongs to the SMC family. RAD50 subfamily. As to quaternary structure, homodimer. Forms a heterotetramer composed of two Mre11 subunits and two Rad50 subunits. The cofactor is Zn(2+).

In terms of biological role, part of the Rad50/Mre11 complex, which is involved in the early steps of DNA double-strand break (DSB) repair. The complex may facilitate opening of the processed DNA ends to aid in the recruitment of HerA and NurA. Rad50 controls the balance between DNA end bridging and DNA resection via ATP-dependent structural rearrangements of the Rad50/Mre11 complex. This chain is DNA double-strand break repair Rad50 ATPase, found in Methanosarcina mazei (strain ATCC BAA-159 / DSM 3647 / Goe1 / Go1 / JCM 11833 / OCM 88) (Methanosarcina frisia).